The sequence spans 316 residues: MTVQPTTIGIVGARGHTGAELIKLIAAHPQLQLVFVSSRELAGQRVAEHSDGYEGELRYESLDADAVAAKAADVVILALPNGKAEPFVAAIDASRPQTLLIDLSADYRFDPAWYYGLPELTRHTYAGQRRISNPGCYATAMQLAITPLREQLAGPPQCFGVSGYSGAGTTPSDKNNPALLADNLMPYALTNHMHEREVSAQLGVPVEFMPHVAPHFRGITMTVNLWLQQPLTREQIHARYLERYAHEPLIEIVDEAPWVSRIAGTQGVQIGGFTMAPGNKRVVVVATLDNLLKGAATQAMQNLNLALGWDELTAIG.

Cysteine 136 is an active-site residue.

Belongs to the NAGSA dehydrogenase family. Type 1 subfamily.

The protein localises to the cytoplasm. The enzyme catalyses N-acetyl-L-glutamate 5-semialdehyde + phosphate + NADP(+) = N-acetyl-L-glutamyl 5-phosphate + NADPH + H(+). The protein operates within amino-acid biosynthesis; L-arginine biosynthesis; N(2)-acetyl-L-ornithine from L-glutamate: step 3/4. Its function is as follows. Catalyzes the NADPH-dependent reduction of N-acetyl-5-glutamyl phosphate to yield N-acetyl-L-glutamate 5-semialdehyde. The protein is N-acetyl-gamma-glutamyl-phosphate reductase of Xanthomonas campestris pv. campestris (strain ATCC 33913 / DSM 3586 / NCPPB 528 / LMG 568 / P 25).